Reading from the N-terminus, the 223-residue chain is Global nitrogen regulator (223 aa).

In terms of domain architecture, HTH crp-type spans 143–216 (RDMGSRLVSF…KKKITVHKPV (74 aa)). The H-T-H motif DNA-binding region spans 176–195 (HQAIAEAIGSTRVTVTRLLG).

Required for full expression of proteins subject to ammonium repression. Transcriptional activator of genes subject to nitrogen control. Functionally, has affinity for the xisA upstream region. Binds to a 66 bp region containing three repeats of the consensus recognition sequence 5'-ACATT-3'. This Nostoc sp. (strain PCC 7120 / SAG 25.82 / UTEX 2576) protein is Global nitrogen regulator (ntcA).